Here is a 372-residue protein sequence, read N- to C-terminus: Tribbles homolog 1 (372 aa).

2 disordered regions span residues 1-23 (MRVGPVRSAMSGASQPRGPALLF) and 52-86 (ECSSPPDYLSPPGSPCSPQPPPAAPGAGGGSGSAP). Positions 59 to 75 (YLSPPGSPCSPQPPPAA) are enriched in pro residues. In terms of domain architecture, Protein kinase spans 91–338 (IADYLLLPLA…APEILLHPWF (248 aa)). A COP1-binding motif is present at residues 355 to 360 (DQIVPE).

Belongs to the protein kinase superfamily. CAMK Ser/Thr protein kinase family. Tribbles subfamily. In terms of assembly, monomer. Interacts (via protein kinase domain) with CEBPA. Interacts with COP1. In terms of tissue distribution, expressed in most human tissues with the highest levels in skeletal muscle, thyroid gland, pancreas, peripheral blood leukocytes, and bone marrow.

Its function is as follows. Adapter protein involved in protein degradation by interacting with COP1 ubiquitin ligase. The COP1-binding motif is masked by autoinhibitory interactions with the protein kinase domain. Serves to alter COP1 substrate specificity by directing the activity of COP1 toward CEBPA. Binds selectively the recognition sequence of CEBPA. Regulates myeloid cell differentiation by altering the expression of CEBPA in a COP1-dependent manner. Controls macrophage, eosinophil and neutrophil differentiation via the COP1-binding domain. Interacts with MAPK kinases and regulates activation of MAP kinases, but has no kinase activity. The chain is Tribbles homolog 1 from Homo sapiens (Human).